Consider the following 81-residue polypeptide: MAAHKKSHIRIFFVSVMIILSLFSGFGEGQTYINYNGMKGDIIPGCSSKNPKECVKIPAYSYNRGCEISTRCQRQQHSSSS.

The N-terminal stretch at 1-29 (MAAHKKSHIRIFFVSVMIILSLFSGFGEG) is a signal peptide. 2 disulfide bridges follow: Cys-46-Cys-54 and Cys-66-Cys-72.

It belongs to the plant rapid alkalinization factor (RALF) family.

The protein localises to the secreted. In terms of biological role, cell signaling peptide that may regulate plant stress, growth, and development. Mediates a rapid alkalinization of extracellular space by mediating a transient increase in the cytoplasmic Ca(2+) concentration leading to a calcium-dependent signaling events through a cell surface receptor and a concomitant activation of some intracellular mitogen-activated protein kinases. In Arabidopsis thaliana (Mouse-ear cress), this protein is Protein RALF-like 6 (RALFL6).